A 400-amino-acid polypeptide reads, in one-letter code: Formate-dependent phosphoribosylglycinamide formyltransferase (400 aa).

N(1)-(5-phospho-beta-D-ribosyl)glycinamide is bound by residues 22–23 (EL) and Glu82. Residues Arg115, Lys157, 162 to 167 (SSGKGQ), 197 to 200 (EGFV), and Glu205 each bind ATP. In terms of domain architecture, ATP-grasp spans 120-315 (RLAAETLGLP…EFELHARAIL (196 aa)). The Mg(2+) site is built by Glu274 and Glu286. N(1)-(5-phospho-beta-D-ribosyl)glycinamide is bound by residues Asp293, Lys362, and 369 to 370 (RR).

It belongs to the PurK/PurT family. As to quaternary structure, homodimer.

The enzyme catalyses N(1)-(5-phospho-beta-D-ribosyl)glycinamide + formate + ATP = N(2)-formyl-N(1)-(5-phospho-beta-D-ribosyl)glycinamide + ADP + phosphate + H(+). It functions in the pathway purine metabolism; IMP biosynthesis via de novo pathway; N(2)-formyl-N(1)-(5-phospho-D-ribosyl)glycinamide from N(1)-(5-phospho-D-ribosyl)glycinamide (formate route): step 1/1. In terms of biological role, involved in the de novo purine biosynthesis. Catalyzes the transfer of formate to 5-phospho-ribosyl-glycinamide (GAR), producing 5-phospho-ribosyl-N-formylglycinamide (FGAR). Formate is provided by PurU via hydrolysis of 10-formyl-tetrahydrofolate. In Mycolicibacterium vanbaalenii (strain DSM 7251 / JCM 13017 / BCRC 16820 / KCTC 9966 / NRRL B-24157 / PYR-1) (Mycobacterium vanbaalenii), this protein is Formate-dependent phosphoribosylglycinamide formyltransferase.